Consider the following 125-residue polypeptide: Large ribosomal subunit protein bL12 (125 aa).

Belongs to the bacterial ribosomal protein bL12 family. In terms of assembly, homodimer. Part of the ribosomal stalk of the 50S ribosomal subunit. Forms a multimeric L10(L12)X complex, where L10 forms an elongated spine to which 2 to 4 L12 dimers bind in a sequential fashion. Binds GTP-bound translation factors.

Its function is as follows. Forms part of the ribosomal stalk which helps the ribosome interact with GTP-bound translation factors. Is thus essential for accurate translation. The chain is Large ribosomal subunit protein bL12 from Polaromonas sp. (strain JS666 / ATCC BAA-500).